A 368-amino-acid polypeptide reads, in one-letter code: Methionine import ATP-binding protein MetN (368 aa).

Residues 5–260 (IELNNLSVQF…PKEALTKQFI (256 aa)) form the ABC transporter domain. 41-48 (GYSGAGKS) serves as a coordination point for ATP.

The protein belongs to the ABC transporter superfamily. Methionine importer (TC 3.A.1.24) family. As to quaternary structure, the complex is composed of two ATP-binding proteins (MetN), two transmembrane proteins (MetI) and a solute-binding protein (MetQ).

The protein resides in the cell membrane. The catalysed reaction is L-methionine(out) + ATP + H2O = L-methionine(in) + ADP + phosphate + H(+). It carries out the reaction D-methionine(out) + ATP + H2O = D-methionine(in) + ADP + phosphate + H(+). Functionally, part of the ABC transporter complex MetNIQ involved in methionine import. Responsible for energy coupling to the transport system. In Lactococcus lactis subsp. cremoris (strain SK11), this protein is Methionine import ATP-binding protein MetN.